Consider the following 115-residue polypeptide: Putative UPF0320 protein YKL225W (115 aa).

This sequence belongs to the UPF0320 family.

In Saccharomyces cerevisiae (strain ATCC 204508 / S288c) (Baker's yeast), this protein is Putative UPF0320 protein YKL225W.